Consider the following 75-residue polypeptide: Protease B inhibitor 2 (75 aa).

T74 is subject to Phosphothreonine.

This sequence belongs to the protease inhibitor I9 family. As to quaternary structure, part of the heterodimeric LMA1 complex together with the thioredoxin II/TRX2. LMA1 binds to the ATPase SEC18.

It localises to the cytoplasm. In terms of biological role, cytosolic inhibitor of vacuolar proteinase B (yscB), probably regulating protease B activity during limited proteolysis. PBI2 is a component of the LMA1 complex, which is involved in the facilitation of vesicle fusion such as homotypic vacuole and ER-derived COPII vesicle fusion with the Golgi. This chain is Protease B inhibitor 2 (PBI2), found in Saccharomyces cerevisiae (strain ATCC 204508 / S288c) (Baker's yeast).